Consider the following 362-residue polypeptide: Chorismate synthase (362 aa).

Residue R46 coordinates NADP(+). Residues 122–124 (RSS), 238–239 (NA), G278, 293–297 (KPTPS), and R319 each bind FMN.

This sequence belongs to the chorismate synthase family. In terms of assembly, homotetramer. It depends on FMNH2 as a cofactor.

The enzyme catalyses 5-O-(1-carboxyvinyl)-3-phosphoshikimate = chorismate + phosphate. Its pathway is metabolic intermediate biosynthesis; chorismate biosynthesis; chorismate from D-erythrose 4-phosphate and phosphoenolpyruvate: step 7/7. Its function is as follows. Catalyzes the anti-1,4-elimination of the C-3 phosphate and the C-6 proR hydrogen from 5-enolpyruvylshikimate-3-phosphate (EPSP) to yield chorismate, which is the branch point compound that serves as the starting substrate for the three terminal pathways of aromatic amino acid biosynthesis. This reaction introduces a second double bond into the aromatic ring system. The chain is Chorismate synthase from Campylobacter jejuni subsp. doylei (strain ATCC BAA-1458 / RM4099 / 269.97).